We begin with the raw amino-acid sequence, 399 residues long: 5'-C-glycyluridine monooxygenase-decarboxylase (399 aa).

Phosphate is bound at residue Thr-179. N6-(pyridoxal phosphate)lysine is present on Lys-230. The phosphate site is built by Arg-318, Arg-322, Arg-353, and Arg-367.

Belongs to the SelA family. As to quaternary structure, homooctamer; tetramer of homodimers. Pyridoxal 5'-phosphate is required as a cofactor.

The catalysed reaction is (5'S,6'R)-C-glycyluridine + O2 = uridine-5'-carboxamide + CO2 + H2O. It functions in the pathway antibiotic biosynthesis. Its activity is regulated as follows. Activity is dependent on phosphate. Functionally, monooxygenase-decarboxylase involved in the biosynthesis of the capuramycin-type nucleoside antibiotic A-503083. Catalyzes the oxidative decarboxylation of 5'-C-glycyluridine (GlyU) to uridine-5'-carboxamide (CarU). Is stereospecific for the (5'S,6'R)-diastereomer of GlyU. Directly incorporates a single oxygen atom from O(2) into the product CarU. The chain is 5'-C-glycyluridine monooxygenase-decarboxylase from Streptomyces sp.